Consider the following 572-residue polypeptide: 2-isopropylmalate synthase (572 aa).

Residues 39 to 313 enclose the Pyruvate carboxyltransferase domain; sequence PVWMSTDLRD…HPGLDFSRIN (275 aa). Mg(2+) is bound by residues Asp-48, His-252, His-254, and Asn-288. Residues 445 to 572 form a regulatory domain region; that stretch reads VAAPYAYVEH…GVGRQVAATR (128 aa).

Belongs to the alpha-IPM synthase/homocitrate synthase family. LeuA type 2 subfamily. As to quaternary structure, homodimer. The cofactor is Mg(2+).

Its subcellular location is the cytoplasm. It carries out the reaction 3-methyl-2-oxobutanoate + acetyl-CoA + H2O = (2S)-2-isopropylmalate + CoA + H(+). It functions in the pathway amino-acid biosynthesis; L-leucine biosynthesis; L-leucine from 3-methyl-2-oxobutanoate: step 1/4. Catalyzes the condensation of the acetyl group of acetyl-CoA with 3-methyl-2-oxobutanoate (2-ketoisovalerate) to form 3-carboxy-3-hydroxy-4-methylpentanoate (2-isopropylmalate). The protein is 2-isopropylmalate synthase of Azoarcus sp. (strain BH72).